The primary structure comprises 1076 residues: DNA-directed RNA polymerase subunit beta (1076 aa).

It belongs to the RNA polymerase beta chain family. In terms of assembly, in plastids the minimal PEP RNA polymerase catalytic core is composed of four subunits: alpha, beta, beta', and beta''. When a (nuclear-encoded) sigma factor is associated with the core the holoenzyme is formed, which can initiate transcription.

It is found in the plastid. Its subcellular location is the chloroplast. It catalyses the reaction RNA(n) + a ribonucleoside 5'-triphosphate = RNA(n+1) + diphosphate. DNA-dependent RNA polymerase catalyzes the transcription of DNA into RNA using the four ribonucleoside triphosphates as substrates. This Lolium perenne (Perennial ryegrass) protein is DNA-directed RNA polymerase subunit beta.